Consider the following 3184-residue polypeptide: MDAERGSVAPRDIDTLKKEVQLRVNPLVLKFQDAVSGKVYRLPLTVHNLGRWNQKIRFQEPSKPQFKLLLTSLDKELASGLQMTAMVEYHPNKNEDMSDHIFISVGNKVLDIPLFGLIPVCQLEIVPVVDFGTLVANSKVHCKEITIINRGKAPGKFKAEYQGQLPIVISPSSGIVKAKTSMVIKVDFCADQAQIVNEMARVSLQGCPETFLNIKVRVVEQIIELFHMNSERKLECIRFGSVFFGTSKLEHALLYNNSPESINWVAIMQDDCVGEELGTNIHQRTDIAINNISYLNKIKKIDMTDFMSCVPNEGTLLPYQKIVITFCFSPKLVVDTKKDVGPSHRQDYALFVRFDSVGSKDGFLRDDNSNTMKSNRLQKVELALTGSGLPVILQFDPGKSLTFAPCHMGEHSDILCIVKNQSISLPVMYHFKKTAHFKMDPERGKIDEGCIQNVICSFVPHQIGVFKVKQVIEIIGPVADDNLRSLSMKPFLYIHLNFSSTCKAFTRKVGVKINPGISPLISNPTRHFVAKDSEKKDDLPPVAAMLQSTATKLHDHCLKDESTKNALIAFPNDRATSIRSGDHHEHFRTIFTKIPRYDYTDPDYEYTDLEKLERKAHRDYYTNYINNLRTIRLRKEAQRERKFPVNEVDIGMLPLSGLKSPPLSQSEIEEEIPPSLKASSLKANRLLSTKKIASRESECLQRKITRGLKSKPTTHQEKQECSKVLTPKQIHQVIVGPSVLNFGNICVKSTNTHLLHIVNMLPMYILIQLDVDFEELQKTKQFSYVIPPTSSTYISMVFESSTSGKFWKSFTFKINNIPGGHILVMAAILPVKLELSSNEIVLRPQSFLLKTCFRGTVRLYNHLNCPAQFGWKPVTTLRGIAFTICPAQGTVDPYCSLECEVTWQPGFSSPDKGEFLLQVSGGNTLTLKCIAHVGHTKVTFLEPRILFSNCSQGLTTWRKAILHNIGQNHAYFKVCDQSLLSTINIVPSEGIIPFGGITVLNISCTPSVAEKFDTRAKVAIHHANVIDLRIGGSVEIPDVEILPSTFNFSGTYVGTTEIIPFIIKNRGVTRARVEFNLKEFPLFAMDFKGNAGECKNVEGPYMYAIEVEEGTSAECGITFSPVEVATYDFSFPVLINSFKASDLYCEYLSQQKVLMPRVSPLIPPCFVQATVLRAPLELSSTVFLFKIPLYEFQHNKEVTRIQDLVLHNISKKTVLWSLDIGRIDKYFKSGIFKFTALIGSLKPNEKYTISIHFCPKQTITYLADVAIRLNDNLFDYRILHLIGEIQLPKISFDPSFICFTPVPLDVTTGVDIRILPQNYFSNSTLHFKIPTAKLLDNDEIHPLTVTFPNGRVIKGSNTGLNDEILCHLSFSSSKPVSFFANLFFSDDRNNWFSLPVTATSENCILTIYLYLAVHLDTQRVVLKEEKQGNIKKPRGSFLVPRRDSKSFASQKMKRGSLVPKFNDAEVICGNLFVGMEISRDYFDSDESIAEKLYAKYLEKEEKCQQFFAPEEGSKAFDYFQKVVNAAQTWFSLFGWPEGPHSLSIPETIRRDVQKIQFYSTSSPPKKFSRQSDFSKYNKTIYDVILHLSGKLPPGINAGQSLPVDNVERVMQLHLQHASLLDFITAQGGCISHVLPEFLLEPKDYMKWLEITTATKSTALSTLKGNYSVNIDMDNFEAWSKRAWTDVFLQIYKVTILSRVTPHCTSSMPILHGENKSKISPCFASSNIYSDSERILLSWLNTNYESQRTSIWKNNKSDVPPGRWIVNFDSDLLDGLVFATQLAAYCPFLIETYFINMYTKPKRPEQYLHNCLIIINSLREIGFDLNIQAIDICDPNPVLMLMLCVYLYERLPTYLPKKVVPFSCTLYDVVVGQILLKNPSLKNLVYTATIVGRDANNFCLAQTGNVVTIGPKNHIVLVVKFVSRFLHPAEATLLLISRPKCGIGGSTLAFALKGEIRNFKAIDVIKCKAPCYQWKEVTVNVKNPFPSGGDFHVILVESTTLMYLPAQVTDSSKVSVMPDHMRSSDYAADQSSSHAENGLRTSIKSNFIREFFCSSTTLSLRPKTSSSIDVYYLPFDMHVRYCAIILSNKDIGDLIYIIEGRGLIPLPSNFLPLEPPSPIDYSTSLEEDKEDPILYLNCKPHQILDMDLKIPLTNEAKEKALAFAAQQQMSTLEYERRAISGTLESSTIRAAVALLGLTKIECLLLFNMSKLKKPKSILYTTELSLPAHFNIPRKIYIPQIPEPPDFHMQSLQIKPQIVSGERPFQKPLPSIQAALEGTVSIPLRFAPLGSGRYPCKLLLLSRHDVRVYLLEGIVNEEVPEAELLFKTPAFQPLTQNIPIKNESKKLSKFHVKIEGEWFHGPPILHVGPGETIQYPLTFKPILECEIMGKLTLQNEVDGMAHIVEIDGIGTKPIALDHIIIDCKVGKVTDKSIIVPNYTKSLLTFKVTSDLSIVWGNSFITIEPDDSIPYTLHVCPWKRGTFKGAIMFFVKSRDEEESQEETDTEKDFSSQETPSDQSTIIFEEYSEEKVKALKIWYHLEIRSSPGPPVDIIELHCIALETTCIEIPISNSKNQPVCLDVKLTCSALNGPVEMTLAPLESVTYIVWYSPATTGYKEESIIFQPEMGEEFWYLLKLTTELPKPKEIPEMQCDLGKKIIQTLPLYNPTHETLELRIRNSNPINFVIELNRKLPLVLLPHSTTELSVYFHPSGLGRHGHETCINFYCTQFKEWKFYLFGVGLYPRPIELKRVTTILGLQASVMVHFRNPTSEDVSVDLILTNKEQPKGLAIDQCWKTFLHENAAFRFSSLRRTHGIIVPPKGNLDIPVLFIPSTMTLYKTMVIVKMKRTNKKNWLIDNFDELSAETKRYMGVGYGEIQAIHWMYPIIGLPQAPPPKSSPVIIRCQANKQREEKVEVSMLGSFFNTHPKPDMTEFLVFPKRNVYKSIYEDVDVNSKRREFEYEIEFESEDVKSNLDSFVTLYLFRKHFNVKSEIISLIFNVIFTPRKPFRANVTLNVECITEGIWKFPITLIATEPEVEDVINIHGIGLFKTSETEFRLTSQTRYYEPFVAHFLPGSDQEFFVKPQSGELPPFYTKGIVIIVGFKPRMYSKKYQATLVIQTDEIYWLYEINGLAPSSKSLTHVTAKVDATSKIYDCMPPIQRNFIRENAKLRSTAVSSTVKGAPLFKKHK.

One can recognise a Calponin-homology (CH) domain in the interval 1729 to 1851 (SDSERILLSW…LCVYLYERLP (123 aa)). The tract at residues 2491–2514 (RDEEESQEETDTEKDFSSQETPSD) is disordered. Residues 2493-2502 (EEESQEETDT) are compositionally biased toward acidic residues.

As to quaternary structure, interacts with CFAP65. Highly expressed in spermatzoa (at protein level).

Its subcellular location is the cytoplasm. It is found in the cytoskeleton. The protein resides in the flagellum basal body. Functionally, plays a role in flagellar formation and sperm motility. This Mus musculus (Mouse) protein is Cilia and flagella-associated protein 47.